Here is a 128-residue protein sequence, read N- to C-terminus: Small ribosomal subunit protein uS9 (128 aa).

Positions 105-128 (DPRSVERKKPGQPKARRRFQFSKR) are disordered. Residues 114 to 128 (PGQPKARRRFQFSKR) show a composition bias toward basic residues.

This sequence belongs to the universal ribosomal protein uS9 family.

This is Small ribosomal subunit protein uS9 from Bacteroides thetaiotaomicron (strain ATCC 29148 / DSM 2079 / JCM 5827 / CCUG 10774 / NCTC 10582 / VPI-5482 / E50).